The sequence spans 326 residues: D-alanine--D-alanine ligase (326 aa).

An ATP-grasp domain is found at 121 to 320; sequence ISVLRPYGIK…LKDLFGSTIE (200 aa). ATP is bound at residue 149–204; the sequence is VDKVGLPCFVKANRAGSSFGVTKVKTEDEIISAAKTAFTEDDEAIIESFLDGTEVS. 3 residues coordinate Mg(2+): E275, E287, and N289.

The protein belongs to the D-alanine--D-alanine ligase family. Mg(2+) serves as cofactor. The cofactor is Mn(2+).

The protein resides in the cytoplasm. The enzyme catalyses 2 D-alanine + ATP = D-alanyl-D-alanine + ADP + phosphate + H(+). Its pathway is cell wall biogenesis; peptidoglycan biosynthesis. Its function is as follows. Cell wall formation. In Christiangramia forsetii (strain DSM 17595 / CGMCC 1.15422 / KT0803) (Gramella forsetii), this protein is D-alanine--D-alanine ligase.